The following is a 342-amino-acid chain: HPr kinase/phosphorylase (342 aa).

Residues His-153 and Lys-174 contribute to the active site. Position 168-175 (168-175 (GKSGLGKS)) interacts with ATP. Mg(2+) is bound at residue Ser-175. Asp-192 functions as the Proton acceptor; for phosphorylation activity. Proton donor; for dephosphorylation activity in the catalytic mechanism. Residues 217-226 (MEIRGLGVVD) are important for the catalytic mechanism of both phosphorylation and dephosphorylation. Residue Glu-218 participates in Mg(2+) binding. The active site involves Arg-259. The important for the catalytic mechanism of dephosphorylation stretch occupies residues 280–285 (PIFPGK).

Belongs to the HPrK/P family. As to quaternary structure, homohexamer. Mg(2+) serves as cofactor.

It catalyses the reaction [HPr protein]-L-serine + ATP = [HPr protein]-O-phospho-L-serine + ADP + H(+). The catalysed reaction is [HPr protein]-O-phospho-L-serine + phosphate + H(+) = [HPr protein]-L-serine + diphosphate. In terms of biological role, catalyzes the ATP- as well as the pyrophosphate-dependent phosphorylation of a specific serine residue in HPr, a phosphocarrier protein of the phosphoenolpyruvate-dependent sugar phosphotransferase system (PTS). HprK/P also catalyzes the pyrophosphate-producing, inorganic phosphate-dependent dephosphorylation (phosphorolysis) of seryl-phosphorylated HPr (P-Ser-HPr). This Chlorobaculum tepidum (strain ATCC 49652 / DSM 12025 / NBRC 103806 / TLS) (Chlorobium tepidum) protein is HPr kinase/phosphorylase.